We begin with the raw amino-acid sequence, 116 residues long: Large ribosomal subunit protein bL17 (116 aa).

It belongs to the bacterial ribosomal protein bL17 family. In terms of assembly, part of the 50S ribosomal subunit. Contacts protein L32.

The sequence is that of Large ribosomal subunit protein bL17 from Synechococcus sp. (strain CC9902).